The primary structure comprises 387 residues: Paralemmin-1 (387 aa).

Residue M1 is modified to N-acetylmethionine. A coiled-coil region spans residues 9 to 101 (TSQQERLQAI…EKEIEVLERG (93 aa)). Basic and acidic residues-rich tracts occupy residues 31-41 (KRRQLEDERRQ) and 69-102 (DLRR…ERGD). The tract at residues 31-160 (KRRQLEDERR…VSNTPLRTVD (130 aa)) is disordered. Positions 104 to 117 (APATAKENAAAPSP) are enriched in low complexity. A phosphoserine mark is found at S116 and S124. Residues T141 and T145 each carry the phosphothreonine modification. S162 carries the phosphoserine modification. Residue T243 is modified to Phosphothreonine. S245 is modified (phosphoserine). 2 disordered regions span residues 247 to 296 (AGST…GQEP) and 335 to 378 (AEPK…DMKK). The segment covering 286–296 (GPPGIQPGQEP) has biased composition (low complexity). Residue S346 is modified to Phosphoserine. At T367 the chain carries Phosphothreonine. The residue at position 369 (S369) is a Phosphoserine. 2 S-palmitoyl cysteine lipidation sites follow: C381 and C383. C384 is modified (cysteine methyl ester). The S-farnesyl cysteine moiety is linked to residue C384. The propeptide at 385–387 (SIM) is removed in mature form.

The protein belongs to the paralemmin family. As to quaternary structure, interacts with dopamine receptor DRD3. As to expression, widely expressed with highest expression in brain and testis and intermediate expression in heart and adrenal gland.

It is found in the cell membrane. The protein localises to the cell projection. Its subcellular location is the filopodium membrane. The protein resides in the axon. It localises to the dendrite. It is found in the dendritic spine. The protein localises to the basolateral cell membrane. Its subcellular location is the apicolateral cell membrane. In terms of biological role, involved in plasma membrane dynamics and cell process formation. Isoform 1 and isoform 2 are necessary for axonal and dendritic filopodia induction, for dendritic spine maturation and synapse formation in a palmitoylation-dependent manner. The sequence is that of Paralemmin-1 (PALM) from Homo sapiens (Human).